The sequence spans 402 residues: MFYTAATALRDFLKQESAGGIVLMFAAVLALIFANTALADTYFSVLATEIAVTVGGGGIEKPALLWINDGLMAVFFFLVGLEVKREVLTGQLSSWKQASLPLIAAFGGIVLPALVFYGINSGTPENLSGWAIPAATDIAFALGILALLGKRVPVALKALLLAIAVIDDIAAIAIIAIFYTPGVELAMLGAAAITLLILSAFGRAKAGSSIPYIVLGIVLWYFVLKSGVHATLAGVALAMTVPLIDRKGNHMLEHMEHALHSWVAFLVVPIFALANAGVSFEGVELSALFAPLPLGIALGLIVGKQVGIFGFAWLAVKTGFAQLPSSVGWLQVWGLSLVAGIGFTMSLFIGNLAFADPAQINAVKIGVLSGSLIAALVGIAILVLGAKAPAAKSADERVQAPA.

11 consecutive transmembrane segments (helical) span residues 18–38 (AGGIVLMFAAVLALIFANTAL), 63–83 (ALLWINDGLMAVFFFLVGLEV), 99–119 (SLPLIAAFGGIVLPALVFYGI), 129–149 (GWAIPAATDIAFALGILALLG), 158–178 (ALLLAIAVIDDIAAIAIIAIF), 182–202 (GVELAMLGAAAITLLILSAFG), 210–230 (IPYIVLGIVLWYFVLKSGVHA), 258–278 (ALHSWVAFLVVPIFALANAGV), 296–316 (IALGLIVGKQVGIFGFAWLAV), 329–349 (WLQVWGLSLVAGIGFTMSLFI), and 365–385 (IGVLSGSLIAALVGIAILVLG).

Belongs to the NhaA Na(+)/H(+) (TC 2.A.33) antiporter family.

The protein resides in the cell inner membrane. The catalysed reaction is Na(+)(in) + 2 H(+)(out) = Na(+)(out) + 2 H(+)(in). Na(+)/H(+) antiporter that extrudes sodium in exchange for external protons. This is Na(+)/H(+) antiporter NhaA 2 from Erythrobacter litoralis (strain HTCC2594).